The primary structure comprises 474 residues: Aromatic amino acid aminotransferase C56E4.03 (474 aa).

The protein belongs to the class-I pyridoxal-phosphate-dependent aminotransferase family. Pyridoxal 5'-phosphate serves as cofactor.

Its subcellular location is the cytoplasm. The catalysed reaction is an aromatic L-alpha-amino acid + 2-oxoglutarate = an aromatic oxo-acid + L-glutamate. Has aromatic amino acid transaminase activity. This is Aromatic amino acid aminotransferase C56E4.03 from Schizosaccharomyces pombe (strain 972 / ATCC 24843) (Fission yeast).